The following is a 151-amino-acid chain: Ribonuclease P protein component (151 aa).

The disordered stretch occupies residues 1–62 (MDEKDLATQP…LKGDSAFRRL (62 aa)). The segment covering 28 to 48 (GAQGAEAQAAEGPLAAHAQGA) has biased composition (low complexity).

Belongs to the RnpA family. In terms of assembly, consists of a catalytic RNA component (M1 or rnpB) and a protein subunit.

It carries out the reaction Endonucleolytic cleavage of RNA, removing 5'-extranucleotides from tRNA precursor.. Functionally, RNaseP catalyzes the removal of the 5'-leader sequence from pre-tRNA to produce the mature 5'-terminus. It can also cleave other RNA substrates such as 4.5S RNA. The protein component plays an auxiliary but essential role in vivo by binding to the 5'-leader sequence and broadening the substrate specificity of the ribozyme. The chain is Ribonuclease P protein component from Thermus oshimai.